A 221-amino-acid polypeptide reads, in one-letter code: Large ribosomal subunit protein uL3 (221 aa).

The segment at 131–165 is disordered; sequence HNQSRGPETHGSRHHRRPGSMGPIKGKIKGKKLPG.

Belongs to the universal ribosomal protein uL3 family. In terms of assembly, part of the 50S ribosomal subunit. Forms a cluster with proteins L14 and L19.

Functionally, one of the primary rRNA binding proteins, it binds directly near the 3'-end of the 23S rRNA, where it nucleates assembly of the 50S subunit. The polypeptide is Large ribosomal subunit protein uL3 (Phytoplasma australiense).